The following is a 297-amino-acid chain: HTH-type transcriptional regulator ArgP (297 aa).

The region spanning 4–60 (PDYRTLQALDAVIRERGFERAAQKLCITQSAVSQRIKQLENLFGQPLLVRTIPPRPT) is the HTH lysR-type domain. Residues 21 to 40 (FERAAQKLCITQSAVSQRIK) constitute a DNA-binding region (H-T-H motif).

This sequence belongs to the LysR transcriptional regulatory family. In terms of assembly, homodimer.

In terms of biological role, controls the transcription of genes involved in arginine and lysine metabolism. This chain is HTH-type transcriptional regulator ArgP, found in Pectobacterium carotovorum subsp. carotovorum (strain PC1).